Here is a 387-residue protein sequence, read N- to C-terminus: Paralemmin-1 (387 aa).

Methionine 1 carries the N-acetylmethionine modification. Residues 7-104 (ETISQQERLQ…IEELENADTL (98 aa)) adopt a coiled-coil conformation. Disordered regions lie at residues 22–78 (RRRQ…QEDE) and 98–133 (LENA…DRKA). Composition is skewed to basic and acidic residues over residues 25–41 (QAEV…DRRQ) and 69–78 (DMRKQMQEDE). Serine 116 carries the post-translational modification Phosphoserine. Pro residues predominate over residues 116-125 (SPGPVVPAPC). Phosphothreonine is present on residues threonine 142 and threonine 146. Serine 163 bears the Phosphoserine mark. Phosphothreonine is present on threonine 244. Serine 246 is subject to Phosphoserine. 2 disordered regions span residues 246–297 (SEAG…QEPP) and 334–378 (AAEP…DMKK). Residues 258-273 (GPSEEVVRTTPSRREI) are compositionally biased toward basic and acidic residues. A compositionally biased stretch (low complexity) spans 286 to 297 (GPPGIQPGQEPP). Serine 346 and serine 369 each carry phosphoserine. 2 S-palmitoyl cysteine lipidation sites follow: cysteine 381 and cysteine 383. A Cysteine methyl ester modification is found at cysteine 384. Cysteine 384 carries the S-farnesyl cysteine lipid modification. A propeptide spans 385–387 (SIM) (removed in mature form).

This sequence belongs to the paralemmin family. In terms of assembly, interacts with dopamine receptor DRD3. Post-translationally, phosphorylated.

It localises to the cell membrane. The protein resides in the cell projection. Its subcellular location is the filopodium membrane. It is found in the axon. The protein localises to the dendrite. It localises to the dendritic spine. The protein resides in the basolateral cell membrane. Its subcellular location is the apicolateral cell membrane. Involved in plasma membrane dynamics and cell process formation. Necessary for axonal and dendritic filopodia induction, for dendritic spine maturation and synapse formation in a palmitoylation-dependent manner. The chain is Paralemmin-1 (PALM) from Sus scrofa (Pig).